A 61-amino-acid chain; its full sequence is Small ribosomal subunit protein uS14 (61 aa).

Positions 24, 27, 40, and 43 each coordinate Zn(2+).

This sequence belongs to the universal ribosomal protein uS14 family. Zinc-binding uS14 subfamily. As to quaternary structure, part of the 30S ribosomal subunit. Contacts proteins S3 and S10. The cofactor is Zn(2+).

Binds 16S rRNA, required for the assembly of 30S particles and may also be responsible for determining the conformation of the 16S rRNA at the A site. This is Small ribosomal subunit protein uS14 from Clostridium botulinum (strain ATCC 19397 / Type A).